A 329-amino-acid polypeptide reads, in one-letter code: Alpha/beta hydrolase domain-containing protein 17C (329 aa).

The segment covering Gly53 to Gly79 has biased composition (low complexity). The segment at Gly53–Gly85 is disordered. Catalysis depends on charge relay system residues Ser211, Asp276, and His305.

Belongs to the AB hydrolase superfamily. ABHD17 family. Palmitoylated on cysteine residues located in a cysteine cluster at the N-terminus which promotes membrane localization. Palmitoylation is required for post-synaptic localization and for depalmitoylating activity towards DLG4/PSD95.

It is found in the recycling endosome membrane. The protein localises to the cell projection. Its subcellular location is the dendritic spine. It localises to the postsynaptic density membrane. The enzyme catalyses S-hexadecanoyl-L-cysteinyl-[protein] + H2O = L-cysteinyl-[protein] + hexadecanoate + H(+). Inhibited by palmostatin-B. Hydrolyzes fatty acids from S-acylated cysteine residues in proteins. Has depalmitoylating activity towards NRAS and DLG4/PSD95. The protein is Alpha/beta hydrolase domain-containing protein 17C of Homo sapiens (Human).